A 308-amino-acid chain; its full sequence is Phosphoribosylaminoimidazole-succinocarboxamide synthase (308 aa).

The protein belongs to the SAICAR synthetase family.

The catalysed reaction is 5-amino-1-(5-phospho-D-ribosyl)imidazole-4-carboxylate + L-aspartate + ATP = (2S)-2-[5-amino-1-(5-phospho-beta-D-ribosyl)imidazole-4-carboxamido]succinate + ADP + phosphate + 2 H(+). The protein operates within purine metabolism; IMP biosynthesis via de novo pathway; 5-amino-1-(5-phospho-D-ribosyl)imidazole-4-carboxamide from 5-amino-1-(5-phospho-D-ribosyl)imidazole-4-carboxylate: step 1/2. The sequence is that of Phosphoribosylaminoimidazole-succinocarboxamide synthase from Xylella fastidiosa (strain Temecula1 / ATCC 700964).